The following is a 1783-amino-acid chain: Chitin synthase A (1783 aa).

N-linked (GlcNAc...) asparagine glycans are attached at residues asparagine 159, asparagine 637, asparagine 652, asparagine 664, and asparagine 669. Helical transmembrane passes span 745–765 (IWVA…LSFV) and 781–801 (LTLV…IVAF). N-linked (GlcNAc...) asparagine glycans are attached at residues asparagine 1014 and asparagine 1018. The chain crosses the membrane as a helical span at residues 1051 to 1071 (IMLAMTIILCSVILVKFLAAL). Residue asparagine 1416 is glycosylated (N-linked (GlcNAc...) asparagine). 3 helical membrane passes run 1441–1461 (FVVF…IYLG), 1474–1494 (FPII…LIFI), and 1502–1522 (IGWM…LPIY). Residues asparagine 1529 and asparagine 1617 are each glycosylated (N-linked (GlcNAc...) asparagine). Positions 1659-1724 (THDINRGQTP…SFDFQRGNMQ (66 aa)) are disordered. The span at 1664-1688 (RGQTPFQDFPSSRPSVSNLRGQANP) shows a compositional bias: polar residues. N-linked (GlcNAc...) asparagine glycosylation is present at asparagine 1695. A DEK-C domain is found at 1725 to 1781 (GPDDSMIIEAIQGVLREVDLDTVTKKQVRALVEQRLQTGLVGERRTFMDRQIDNELA).

The protein belongs to the chitin synthase family. Class V subfamily.

Its subcellular location is the cell membrane. It carries out the reaction [(1-&gt;4)-N-acetyl-beta-D-glucosaminyl](n) + UDP-N-acetyl-alpha-D-glucosamine = [(1-&gt;4)-N-acetyl-beta-D-glucosaminyl](n+1) + UDP + H(+). Functionally, polymerizes chitin, a structural polymer of the cell wall and septum, by transferring the sugar moiety of UDP-GlcNAc to the non-reducing end of the growing chitin polymer. Responsible for about 29% of the chitin in conidial walls, is essential for conidial wall strength in media with high water potential and contributes to strength of hyphal tips. This Colletotrichum graminicola (Maize anthracnose fungus) protein is Chitin synthase A.